The following is a 364-amino-acid chain: Mitogen-activated protein kinase 11 (364 aa).

The region spanning Leu-24–Phe-308 is the Protein kinase domain. ATP is bound by residues Val-30–Val-38 and Lys-53. Glu-71 provides a ligand contact to nilotinib. The active-site Proton acceptor is Asp-168. Residue Thr-180 is modified to Phosphothreonine; by MAP2K3, MAP2K4 and MAP2K6. A TXY motif is present at residues Thr-180–Tyr-182. Tyr-182 is subject to Phosphotyrosine; by MAP2K3, MAP2K4 and MAP2K6. The disordered stretch occupies residues His-312–Glu-331. Positions Pro-314–Ser-326 are enriched in acidic residues. Residue Tyr-323 is modified to Phosphotyrosine; by ZAP70.

The protein belongs to the protein kinase superfamily. CMGC Ser/Thr protein kinase family. MAP kinase subfamily. In terms of assembly, interacts with HDAC3 and DUSP16. It depends on Mg(2+) as a cofactor. Dually phosphorylated on Thr-180 and Tyr-182 by MAP2K3/MKK3, MAP2K4/MKK4 and MAP2K6/MKK6, which activates the enzyme.

It localises to the cytoplasm. The protein resides in the nucleus. The catalysed reaction is L-seryl-[protein] + ATP = O-phospho-L-seryl-[protein] + ADP + H(+). It carries out the reaction L-threonyl-[protein] + ATP = O-phospho-L-threonyl-[protein] + ADP + H(+). Activated by phosphorylation on threonine and tyrosine by MAP2K3/MKK3, MAP2K4/MKK4 and MAP2K6/MKK6. MAP2K3/MKK3 and MAP2K6/MKK6 are both essential for the activation of MAPK11 induced by environmental stress. HDAC3 interacts directly and selectively with MAPK11 to repress ATF2 transcriptional activity, and regulate TNF gene expression in LPS-stimulated cells. Inhibited by SB203580 and pyridinyl-imidazole related compounds. Serine/threonine kinase which acts as an essential component of the MAP kinase signal transduction pathway. MAPK11 is one of the four p38 MAPKs which play an important role in the cascades of cellular responses evoked by extracellular stimuli such as pro-inflammatory cytokines or physical stress leading to direct activation of transcription factors. Accordingly, p38 MAPKs phosphorylate a broad range of proteins and it has been estimated that they may have approximately 200 to 300 substrates each. MAPK11 functions are mostly redundant with those of MAPK14. Some of the targets are downstream kinases which are activated through phosphorylation and further phosphorylate additional targets. RPS6KA5/MSK1 and RPS6KA4/MSK2 can directly phosphorylate and activate transcription factors such as CREB1, ATF1, the NF-kappa-B isoform RELA/NFKB3, STAT1 and STAT3, but can also phosphorylate histone H3 and the nucleosomal protein HMGN1. RPS6KA5/MSK1 and RPS6KA4/MSK2 play important roles in the rapid induction of immediate-early genes in response to stress or mitogenic stimuli, either by inducing chromatin remodeling or by recruiting the transcription machinery. On the other hand, two other kinase targets, MAPKAPK2/MK2 and MAPKAPK3/MK3, participate in the control of gene expression mostly at the post-transcriptional level, by phosphorylating ZFP36 (tristetraprolin) and ELAVL1, and by regulating EEF2K, which is important for the elongation of mRNA during translation. MKNK1/MNK1 and MKNK2/MNK2, two other kinases activated by p38 MAPKs, regulate protein synthesis by phosphorylating the initiation factor EIF4E2. In the cytoplasm, the p38 MAPK pathway is an important regulator of protein turnover. For example, CFLAR is an inhibitor of TNF-induced apoptosis whose proteasome-mediated degradation is regulated by p38 MAPK phosphorylation. Ectodomain shedding of transmembrane proteins is regulated by p38 MAPKs as well. In response to inflammatory stimuli, p38 MAPKs phosphorylate the membrane-associated metalloprotease ADAM17. Such phosphorylation is required for ADAM17-mediated ectodomain shedding of TGF-alpha family ligands, which results in the activation of EGFR signaling and cell proliferation. Additional examples of p38 MAPK substrates are the FGFR1. FGFR1 can be translocated from the extracellular space into the cytosol and nucleus of target cells, and regulates processes such as rRNA synthesis and cell growth. FGFR1 translocation requires p38 MAPK activation. In the nucleus, many transcription factors are phosphorylated and activated by p38 MAPKs in response to different stimuli. Classical examples include ATF1, ATF2, ATF6, ELK1, PTPRH, DDIT3, TP53/p53 and MEF2C and MEF2A. The p38 MAPKs are emerging as important modulators of gene expression by regulating chromatin modifiers and remodelers. The promoters of several genes involved in the inflammatory response, such as IL6, IL8 and IL12B, display a p38 MAPK-dependent enrichment of histone H3 phosphorylation on 'Ser-10' (H3S10ph) in LPS-stimulated myeloid cells. This phosphorylation enhances the accessibility of the cryptic NF-kappa-B-binding sites marking promoters for increased NF-kappa-B recruitment. Phosphorylates methyltransferase DOT1L on 'Ser-834', 'Thr-900', 'Ser-902', 'Thr-984', 'Ser-1001', 'Ser-1009' and 'Ser-1104'. The protein is Mitogen-activated protein kinase 11 (Mapk11) of Mus musculus (Mouse).